The primary structure comprises 609 residues: MFS siderochrome iron transporter 1 (609 aa).

Composition is skewed to basic and acidic residues over residues Met-1–Thr-17 and Pro-25–Pro-34. A disordered region spans residues Met-1–Val-69. The next 14 membrane-spanning stretches (helical) occupy residues Leu-81–Ile-101, Leu-125–Ala-145, Ala-154–Ser-174, Ala-182–Ala-202, Ser-220–Val-240, Trp-245–Leu-265, Val-300–Ala-320, Thr-329–Trp-349, Ser-368–Phe-390, Tyr-407–Ile-427, Phe-432–Ile-452, Ile-469–Ala-489, Ala-496–Ile-516, and Ile-573–Leu-593.

This sequence belongs to the major facilitator superfamily.

It is found in the cell membrane. Functionally, major facilitator transporter involved in extracellular siderophore uptake. Gibberella zeae produces extracellular coprogen-type siderophores as well as the intracellular siderophore ferricrocin. The role of extracellular siderophores is to supply iron to the fungus during plant infection, and the intracellular ferricrocin is required for intracellular iron distribution and storage with a crucial role in ascus and ascospore development. The chain is MFS siderochrome iron transporter 1 from Gibberella zeae (strain ATCC MYA-4620 / CBS 123657 / FGSC 9075 / NRRL 31084 / PH-1) (Wheat head blight fungus).